The following is a 485-amino-acid chain: Hemolysin (485 aa).

The first 28 residues, 1–28 (MKNFKGRKFLTCVLVSLCTLNYSSISFA), serve as a signal peptide directing secretion. Transmembrane regions (beta stranded) follow at residues 196–209 (KAQI…NAKY), 216–225 (IDFNAVANGE), 294–303 (SKDVQAAFKA), and 311–323 (ETSG…FEES). Positions 465 to 475 (ECTGLAWEWWR) match the Conserved undecapeptide motif.

This sequence belongs to the cholesterol-dependent cytolysin family. In terms of assembly, homooligomeric pore complex of 35 to 50 subunits; when inserted in the host membrane.

The protein resides in the secreted. The protein localises to the host cell membrane. Functionally, a cholesterol-dependent toxin with hemolytic activity against host red blood cells. Causes cytolysis by forming pores in cholesterol containing host membranes. binding to target membranes, the protein undergoes a major conformation change, leading to its insertion in the host membrane and formation of an oligomeric pore complex. Cholesterol is required for binding to host membranes, membrane insertion and pore formation; cholesterol binding is mediated by a Thr-Leu pair in the C-terminus. Can be reversibly inactivated by oxidation. This is Hemolysin from Bacillus cereus.